The chain runs to 914 residues: Eukaryotic translation initiation factor 3 subunit C-like protein (914 aa).

The segment at 1–44 (MSRFFTTGSDSESESSLSGEELVTKPVGGNYGKQPLLLSEDEED) is disordered. The span at 8-21 (GSDSESESSLSGEE) shows a compositional bias: low complexity. Serine 9, serine 11, serine 13, serine 15, serine 16, serine 18, and serine 39 each carry phosphoserine. The residue at position 99 (lysine 99) is an N6-acetyllysine. 2 disordered regions span residues 157–302 (TSYK…GGEW) and 523–543 (QLTP…NEGE). A phosphoserine mark is found at serine 166, serine 178, serine 181, and serine 182. The span at 166 to 190 (SADEDAEKNEEDSEGSSDEDEDEDG) shows a compositional bias: acidic residues. Positions 199-216 (KKSEAPSGESRKFLKKMD) are enriched in basic and acidic residues. A compositionally biased stretch (acidic residues) spans 217 to 232 (DEDEDSEDSEDDEDWD). Over residues 261-278 (PTTDEDKKAAEKKREDKA) the composition is skewed to basic and acidic residues. The segment covering 291-300 (EEEEEDNEGG) has biased composition (acidic residues). Residues 523–532 (QLTPPEGSSK) show a composition bias toward polar residues. Phosphothreonine is present on threonine 525. Position 644 is an N6-acetyllysine (lysine 644). The PCI domain occupies 674–850 (FHLHINLELL…QTVVMHRTEP (177 aa)). Residues 886-914 (FRDQKDGYRKNEGYMRRGGYRQQQSQTAY) are disordered. The segment covering 887-900 (RDQKDGYRKNEGYM) has biased composition (basic and acidic residues). At serine 910 the chain carries Phosphoserine.

Belongs to the eIF-3 subunit C family. In terms of assembly, component of the eukaryotic translation initiation factor 3 (eIF-3) complex, which is composed of 13 subunits: EIF3A, EIF3B, EIF3C, EIF3D, EIF3E, EIF3F, EIF3G, EIF3H, EIF3I, EIF3J, EIF3K, EIF3L and EIF3M. The eIF-3 complex appears to include 3 stable modules: module A is composed of EIF3A, EIF3B, EIF3G and EIF3I; module B is composed of EIF3F, EIF3H, and EIF3M; and module C is composed of EIF3C, EIF3D, EIF3E, EIF3K and EIF3L. EIF3C of module C binds EIF3B of module A and EIF3H of module B, thereby linking the three modules. EIF3J is a labile subunit that binds to the eIF-3 complex via EIF3B. The eIF-3 complex interacts with RPS6KB1 under conditions of nutrient depletion. Mitogenic stimulation leads to binding and activation of a complex composed of MTOR and RPTOR, leading to phosphorylation and release of RPS6KB1 and binding of EIF4B to eIF-3. Phosphorylated. Phosphorylation is enhanced upon serum stimulation.

Its subcellular location is the cytoplasm. Functionally, component of the eukaryotic translation initiation factor 3 (eIF-3) complex, which is required for several steps in the initiation of protein synthesis. The eIF-3 complex associates with the 40S ribosome and facilitates the recruitment of eIF-1, eIF-1A, eIF-2:GTP:methionyl-tRNAi and eIF-5 to form the 43S pre-initiation complex (43S PIC). The eIF-3 complex stimulates mRNA recruitment to the 43S PIC and scanning of the mRNA for AUG recognition. The eIF-3 complex is also required for disassembly and recycling of post-termination ribosomal complexes and subsequently prevents premature joining of the 40S and 60S ribosomal subunits prior to initiation. The eIF-3 complex specifically targets and initiates translation of a subset of mRNAs involved in cell proliferation, including cell cycling, differentiation and apoptosis, and uses different modes of RNA stem-loop binding to exert either translational activation or repression. In Homo sapiens (Human), this protein is Eukaryotic translation initiation factor 3 subunit C-like protein (EIF3CL).